Here is a 180-residue protein sequence, read N- to C-terminus: Small ribosomal subunit protein uS4 (180 aa).

In terms of domain architecture, S4 RNA-binding spans 104 to 166 (RRLQTIVHRK…PTSPFKNNPP (63 aa)). The segment at 155 to 180 (FYPTSPFKNNPPTAGQGEVNVEQKGN) is disordered.

Belongs to the universal ribosomal protein uS4 family. As to quaternary structure, part of the 30S ribosomal subunit. Contacts protein S5. The interaction surface between S4 and S5 is involved in control of translational fidelity.

One of the primary rRNA binding proteins, it binds directly to 16S rRNA where it nucleates assembly of the body of the 30S subunit. In terms of biological role, with S5 and S12 plays an important role in translational accuracy. This chain is Small ribosomal subunit protein uS4, found in Metallosphaera sedula (strain ATCC 51363 / DSM 5348 / JCM 9185 / NBRC 15509 / TH2).